Here is a 149-residue protein sequence, read N- to C-terminus: Large ribosomal subunit protein eL19 (149 aa).

Residues 45–130 (VDEGAIQAKD…RDLYDKAGGG (86 aa)) form a disordered region. Residues 58 to 85 (NSRGRARERQKKRAYGHQKGAGSRKGKA) are compositionally biased toward basic residues. The span at 90-113 (NSKEDWESRIRAQRTKLRELRDEG) shows a compositional bias: basic and acidic residues.

Belongs to the eukaryotic ribosomal protein eL19 family. In terms of assembly, part of the 50S ribosomal subunit.

Functionally, binds to the 23S rRNA. Located at the polypeptide exit tunnel on the outside of the subunit. The sequence is that of Large ribosomal subunit protein eL19 from Haloarcula marismortui (strain ATCC 43049 / DSM 3752 / JCM 8966 / VKM B-1809) (Halobacterium marismortui).